We begin with the raw amino-acid sequence, 407 residues long: Arginine biosynthesis bifunctional protein ArgJ (407 aa).

The substrate site is built by Thr157, Lys183, Thr194, Glu280, Asn402, and Thr407. Thr194 acts as the Nucleophile in catalysis.

It belongs to the ArgJ family. As to quaternary structure, heterotetramer of two alpha and two beta chains.

It is found in the cytoplasm. The enzyme catalyses N(2)-acetyl-L-ornithine + L-glutamate = N-acetyl-L-glutamate + L-ornithine. It carries out the reaction L-glutamate + acetyl-CoA = N-acetyl-L-glutamate + CoA + H(+). The protein operates within amino-acid biosynthesis; L-arginine biosynthesis; L-ornithine and N-acetyl-L-glutamate from L-glutamate and N(2)-acetyl-L-ornithine (cyclic): step 1/1. It participates in amino-acid biosynthesis; L-arginine biosynthesis; N(2)-acetyl-L-ornithine from L-glutamate: step 1/4. In terms of biological role, catalyzes two activities which are involved in the cyclic version of arginine biosynthesis: the synthesis of N-acetylglutamate from glutamate and acetyl-CoA as the acetyl donor, and of ornithine by transacetylation between N(2)-acetylornithine and glutamate. This is Arginine biosynthesis bifunctional protein ArgJ from Oceanobacillus iheyensis (strain DSM 14371 / CIP 107618 / JCM 11309 / KCTC 3954 / HTE831).